Here is a 192-residue protein sequence, read N- to C-terminus: Large ribosomal subunit protein uL5 (192 aa).

The protein belongs to the universal ribosomal protein uL5 family. In terms of assembly, part of the 50S ribosomal subunit; part of the 5S rRNA/L5/L18/L25 subcomplex. Contacts the 5S rRNA and the P site tRNA. Forms a bridge to the 30S subunit in the 70S ribosome.

Functionally, this is one of the proteins that bind and probably mediate the attachment of the 5S RNA into the large ribosomal subunit, where it forms part of the central protuberance. In the 70S ribosome it contacts protein S13 of the 30S subunit (bridge B1b), connecting the 2 subunits; this bridge is implicated in subunit movement. Contacts the P site tRNA; the 5S rRNA and some of its associated proteins might help stabilize positioning of ribosome-bound tRNAs. The polypeptide is Large ribosomal subunit protein uL5 (Mesorhizobium japonicum (strain LMG 29417 / CECT 9101 / MAFF 303099) (Mesorhizobium loti (strain MAFF 303099))).